The sequence spans 380 residues: Cytochrome b (380 aa).

Transmembrane regions (helical) follow at residues 34-54, 78-99, 114-134, and 179-199; these read FGSL…LLAM, WLIR…YLHI, WNTG…GYVL, and FFAL…IHLT. Positions 84 and 98 each coordinate heme b. 2 residues coordinate heme b: His183 and His197. Position 202 (His202) interacts with a ubiquinone. 4 consecutive transmembrane segments (helical) span residues 227 to 247, 289 to 309, 321 to 341, and 348 to 368; these read LKDI…ALFS, LGGV…PFLH, LSQL…WVGS, and FIII…ILFP.

It belongs to the cytochrome b family. As to quaternary structure, the cytochrome bc1 complex contains 11 subunits: 3 respiratory subunits (MT-CYB, CYC1 and UQCRFS1), 2 core proteins (UQCRC1 and UQCRC2) and 6 low-molecular weight proteins (UQCRH/QCR6, UQCRB/QCR7, UQCRQ/QCR8, UQCR10/QCR9, UQCR11/QCR10 and a cleavage product of UQCRFS1). This cytochrome bc1 complex then forms a dimer. It depends on heme b as a cofactor.

It is found in the mitochondrion inner membrane. Its function is as follows. Component of the ubiquinol-cytochrome c reductase complex (complex III or cytochrome b-c1 complex) that is part of the mitochondrial respiratory chain. The b-c1 complex mediates electron transfer from ubiquinol to cytochrome c. Contributes to the generation of a proton gradient across the mitochondrial membrane that is then used for ATP synthesis. The polypeptide is Cytochrome b (MT-CYB) (Thalassoica antarctica (Antarctic petrel)).